Here is a 306-residue protein sequence, read N- to C-terminus: Pyridoxal 5'-phosphate synthase subunit PdxS (306 aa).

A D-ribose 5-phosphate-binding site is contributed by Asp-36. Lys-93 functions as the Schiff-base intermediate with D-ribose 5-phosphate in the catalytic mechanism. Position 165 (Gly-165) interacts with D-ribose 5-phosphate. Arg-177 is a binding site for D-glyceraldehyde 3-phosphate. D-ribose 5-phosphate is bound by residues Gly-226 and 247 to 248; that span reads GS.

The protein belongs to the PdxS/SNZ family. In the presence of PdxT, forms a dodecamer of heterodimers.

The catalysed reaction is aldehydo-D-ribose 5-phosphate + D-glyceraldehyde 3-phosphate + L-glutamine = pyridoxal 5'-phosphate + L-glutamate + phosphate + 3 H2O + H(+). It functions in the pathway cofactor biosynthesis; pyridoxal 5'-phosphate biosynthesis. Its function is as follows. Catalyzes the formation of pyridoxal 5'-phosphate from ribose 5-phosphate (RBP), glyceraldehyde 3-phosphate (G3P) and ammonia. The ammonia is provided by the PdxT subunit. Can also use ribulose 5-phosphate and dihydroxyacetone phosphate as substrates, resulting from enzyme-catalyzed isomerization of RBP and G3P, respectively. The sequence is that of Pyridoxal 5'-phosphate synthase subunit PdxS from Salinispora tropica (strain ATCC BAA-916 / DSM 44818 / JCM 13857 / NBRC 105044 / CNB-440).